A 97-amino-acid chain; its full sequence is Large ribosomal subunit protein eL21 (97 aa).

Positions 1–24 are enriched in basic residues; it reads MVQKAHSFRRKTRKKLRKHPRRRG. The interval 1–25 is disordered; that stretch reads MVQKAHSFRRKTRKKLRKHPRRRGL.

Belongs to the eukaryotic ribosomal protein eL21 family.

The sequence is that of Large ribosomal subunit protein eL21 (rpl21e) from Pyrococcus abyssi (strain GE5 / Orsay).